The following is a 292-amino-acid chain: Ribose import binding protein RbsB (292 aa).

An N-terminal signal peptide occupies residues methionine 1–alanine 23.

Belongs to the bacterial solute-binding protein 2 family. In terms of assembly, the complex is composed of an ATP-binding protein (RbsA), two transmembrane proteins (RbsC) and a solute-binding protein (RbsB).

The protein localises to the periplasm. Functionally, part of the ABC transporter complex RbsABC involved in ribose import. Binds ribose. The protein is Ribose import binding protein RbsB (rbsB) of Haemophilus influenzae (strain ATCC 51907 / DSM 11121 / KW20 / Rd).